A 308-amino-acid chain; its full sequence is Tryptophan 2,3-dioxygenase (308 aa).

The disordered stretch occupies residues 1–37 (MKPPGDNAPAGCPFSGARAAQPAHEAPHVPGDAAGET). Substrate contacts are provided by residues 77-81 (FIIQH), Tyr-139, and Arg-143. Residue His-266 coordinates heme. A substrate-binding site is contributed by Thr-280.

It belongs to the tryptophan 2,3-dioxygenase family. As to quaternary structure, homotetramer. The cofactor is heme.

It carries out the reaction L-tryptophan + O2 = N-formyl-L-kynurenine. Its pathway is amino-acid degradation; L-tryptophan degradation via kynurenine pathway; L-kynurenine from L-tryptophan: step 1/2. Its function is as follows. Heme-dependent dioxygenase that catalyzes the oxidative cleavage of the L-tryptophan (L-Trp) pyrrole ring and converts L-tryptophan to N-formyl-L-kynurenine. Catalyzes the oxidative cleavage of the indole moiety. The chain is Tryptophan 2,3-dioxygenase from Burkholderia ambifaria (strain MC40-6).